We begin with the raw amino-acid sequence, 274 residues long: Large ribosomal subunit protein uL2 (274 aa).

The interval 222–274 is disordered; that stretch reads GVAMNPVDHPHGGGEGRGKGHHPQSPWGQLAKGYKTRRGKKASDKLIVRRRNG. A compositionally biased stretch (basic and acidic residues) spans 229-239; the sequence is DHPHGGGEGRG.

The protein belongs to the universal ribosomal protein uL2 family. As to quaternary structure, part of the 50S ribosomal subunit. Forms a bridge to the 30S subunit in the 70S ribosome.

Functionally, one of the primary rRNA binding proteins. Required for association of the 30S and 50S subunits to form the 70S ribosome, for tRNA binding and peptide bond formation. It has been suggested to have peptidyltransferase activity; this is somewhat controversial. Makes several contacts with the 16S rRNA in the 70S ribosome. This is Large ribosomal subunit protein uL2 from Thermosipho melanesiensis (strain DSM 12029 / CIP 104789 / BI429).